We begin with the raw amino-acid sequence, 352 residues long: UDP-N-acetylglucosamine--N-acetylmuramyl-(pentapeptide) pyrophosphoryl-undecaprenol N-acetylglucosamine transferase (352 aa).

UDP-N-acetyl-alpha-D-glucosamine contacts are provided by residues 14–16 (TGG), Asn-124, Arg-164, Ser-185, and Gln-285.

It belongs to the glycosyltransferase 28 family. MurG subfamily.

The protein localises to the cell inner membrane. It carries out the reaction di-trans,octa-cis-undecaprenyl diphospho-N-acetyl-alpha-D-muramoyl-L-alanyl-D-glutamyl-meso-2,6-diaminopimeloyl-D-alanyl-D-alanine + UDP-N-acetyl-alpha-D-glucosamine = di-trans,octa-cis-undecaprenyl diphospho-[N-acetyl-alpha-D-glucosaminyl-(1-&gt;4)]-N-acetyl-alpha-D-muramoyl-L-alanyl-D-glutamyl-meso-2,6-diaminopimeloyl-D-alanyl-D-alanine + UDP + H(+). It functions in the pathway cell wall biogenesis; peptidoglycan biosynthesis. Functionally, cell wall formation. Catalyzes the transfer of a GlcNAc subunit on undecaprenyl-pyrophosphoryl-MurNAc-pentapeptide (lipid intermediate I) to form undecaprenyl-pyrophosphoryl-MurNAc-(pentapeptide)GlcNAc (lipid intermediate II). This Chlamydia trachomatis serovar A (strain ATCC VR-571B / DSM 19440 / HAR-13) protein is UDP-N-acetylglucosamine--N-acetylmuramyl-(pentapeptide) pyrophosphoryl-undecaprenol N-acetylglucosamine transferase.